The following is a 140-amino-acid chain: 3-hydroxyacyl-[acyl-carrier-protein] dehydratase FabZ (140 aa).

His-48 is an active-site residue.

Belongs to the thioester dehydratase family. FabZ subfamily.

The protein localises to the cytoplasm. The catalysed reaction is a (3R)-hydroxyacyl-[ACP] = a (2E)-enoyl-[ACP] + H2O. In terms of biological role, involved in unsaturated fatty acids biosynthesis. Catalyzes the dehydration of short chain beta-hydroxyacyl-ACPs and long chain saturated and unsaturated beta-hydroxyacyl-ACPs. This chain is 3-hydroxyacyl-[acyl-carrier-protein] dehydratase FabZ, found in Pelotomaculum thermopropionicum (strain DSM 13744 / JCM 10971 / SI).